The chain runs to 37 residues: Large ribosomal subunit protein bL36c (37 aa).

It belongs to the bacterial ribosomal protein bL36 family.

It localises to the plastid. The protein resides in the chloroplast. The sequence is that of Large ribosomal subunit protein bL36c from Populus alba (White poplar).